Consider the following 1527-residue polypeptide: DNA (cytosine-5)-methyltransferase 1A (1527 aa).

Disordered stretches follow at residues methionine 1–alanine 62 and glycine 661–lysine 718. Composition is skewed to acidic residues over residues glutamate 25 to phenylalanine 36 and lysine 664 to valine 692. Over residues serine 709–lysine 718 the composition is skewed to basic and acidic residues. 2 consecutive BAH domains span residues leucine 742–proline 874 and isoleucine 910–proline 1049. Positions leucine 1092–lysine 1526 constitute an SAM-dependent MTase C5-type domain. Residue cysteine 1197 is part of the active site.

It belongs to the class I-like SAM-binding methyltransferase superfamily. C5-methyltransferase family. In terms of tissue distribution, expressed in roots and inflorescences. Expressed in roots, panicles, anthers, pistils, endosperm and imbibed embryos. Expressed in tissues containing actively replicating and dividing cells, such as shoot and root meristems.

The protein localises to the nucleus. The catalysed reaction is a 2'-deoxycytidine in DNA + S-adenosyl-L-methionine = a 5-methyl-2'-deoxycytidine in DNA + S-adenosyl-L-homocysteine + H(+). In terms of biological role, probably methylates CpG residues and maintains DNA methylation. May be involved in methylation-dependent gene silencing. May play a minor role in the maintenance of DNA methylation. This Oryza sativa subsp. japonica (Rice) protein is DNA (cytosine-5)-methyltransferase 1A.